Reading from the N-terminus, the 382-residue chain is L-lysine 4-hydroxylase (382 aa).

Residues H182, E184, and H318 each coordinate Fe cation.

Belongs to the clavaminate synthase family. The cofactor is Fe(2+).

It carries out the reaction L-lysine + 2-oxoglutarate + O2 = (4R)-4-hydroxy-L-lysine + succinate + CO2. Alpha-ketoglutarate-dependent dioxygenase that in vitro catalyzes the regio- and stereoselective hydroxylation of L-lysine, leading to (4R)-4-hydroxy-L-lysine. Cannot use D-lysine or L-ornithine as substrate. The chain is L-lysine 4-hydroxylase from Chitinophaga pinensis (strain ATCC 43595 / DSM 2588 / LMG 13176 / NBRC 15968 / NCIMB 11800 / UQM 2034).